The sequence spans 88 residues: Large ribosomal subunit protein bL27 (88 aa).

Positions 1 to 21 (MAHKKGQGSTQNNRDSAGRRL) are disordered.

Belongs to the bacterial ribosomal protein bL27 family.

This is Large ribosomal subunit protein bL27 from Helicobacter pylori (strain J99 / ATCC 700824) (Campylobacter pylori J99).